The chain runs to 108 residues: Insulin (108 aa).

Positions 1 to 21 (MAVWLQAGALLVLLVVSSVST) are cleaved as a signal peptide. 3 cysteine pairs are disulfide-bonded: C30–C94, C42–C107, and C93–C98. A propeptide spans 54-84 (DVEPLLGFLPPKSAQETEVADFAFKDHAELI) (c peptide).

Belongs to the insulin family. Heterodimer of a B chain and an A chain linked by two disulfide bonds.

It is found in the secreted. In terms of biological role, insulin decreases blood glucose concentration. It increases cell permeability to monosaccharides, amino acids and fatty acids. It accelerates glycolysis, the pentose phosphate cycle, and glycogen synthesis in liver. The protein is Insulin (ins) of Danio rerio (Zebrafish).